The primary structure comprises 137 residues: Ribosome-binding factor A (137 aa).

Belongs to the RbfA family. In terms of assembly, monomer. Binds 30S ribosomal subunits, but not 50S ribosomal subunits or 70S ribosomes.

The protein resides in the cytoplasm. Functionally, one of several proteins that assist in the late maturation steps of the functional core of the 30S ribosomal subunit. Associates with free 30S ribosomal subunits (but not with 30S subunits that are part of 70S ribosomes or polysomes). Required for efficient processing of 16S rRNA. May interact with the 5'-terminal helix region of 16S rRNA. This chain is Ribosome-binding factor A, found in Cereibacter sphaeroides (strain ATCC 17029 / ATH 2.4.9) (Rhodobacter sphaeroides).